The chain runs to 577 residues: Arginine--tRNA ligase (577 aa).

The 'HIGH' region motif lies at P122–H132.

Belongs to the class-I aminoacyl-tRNA synthetase family. As to quaternary structure, monomer.

Its subcellular location is the cytoplasm. The catalysed reaction is tRNA(Arg) + L-arginine + ATP = L-arginyl-tRNA(Arg) + AMP + diphosphate. The chain is Arginine--tRNA ligase from Shigella flexneri.